The chain runs to 195 residues: Large ribosomal subunit protein uL18 (195 aa).

The protein belongs to the universal ribosomal protein uL18 family. As to quaternary structure, part of the 50S ribosomal subunit. Contacts the 5S and 23S rRNAs.

Functionally, this is one of the proteins that bind and probably mediate the attachment of the 5S RNA into the large ribosomal subunit, where it forms part of the central protuberance. The protein is Large ribosomal subunit protein uL18 of Methanocaldococcus jannaschii (strain ATCC 43067 / DSM 2661 / JAL-1 / JCM 10045 / NBRC 100440) (Methanococcus jannaschii).